Reading from the N-terminus, the 657-residue chain is Glycogen debranching enzyme (657 aa).

Asp-336 functions as the Nucleophile in the catalytic mechanism. Glu-371 functions as the Proton donor in the catalytic mechanism. Residues 458–467 (NEANGEENRD) are compositionally biased toward basic and acidic residues. The disordered stretch occupies residues 458–479 (NEANGEENRDGTNNNYSNNHGK).

Belongs to the glycosyl hydrolase 13 family.

The catalysed reaction is Hydrolysis of (1-&gt;6)-alpha-D-glucosidic linkages to branches with degrees of polymerization of three or four glucose residues in limit dextrin.. The protein operates within glycan degradation; glycogen degradation. Its function is as follows. Removes maltotriose and maltotetraose chains that are attached by 1,6-alpha-linkage to the limit dextrin main chain, generating a debranched limit dextrin. The chain is Glycogen debranching enzyme from Escherichia coli O139:H28 (strain E24377A / ETEC).